A 92-amino-acid polypeptide reads, in one-letter code: Protein S100-A6 (92 aa).

EF-hand domains follow at residues 12 to 47 (LVAI…IGAE) and 48 to 83 (LEDS…LAMI). The Ca(2+) site is built by threonine 28 and glutamate 33. The residue at position 40 (lysine 40) is an N6-acetyllysine. The Ca(2+) site is built by aspartate 61, asparagine 63, aspartate 65, and glutamate 72.

Belongs to the S-100 family. As to quaternary structure, homodimer; head to tail assembly of 2 subunits. Interacts with CACYBP in a calcium-dependent manner. Interacts with ANXA2 and ANXA11 (via N-terminus). Interacts with SUGT1. Interacts with TP53; has higher affinity for TP53 that is phosphorylated on its N-terminal domain, and lower affinity for TP53 that is phosphorylated on its C-terminal domain. Interacts with tropomyosin. Interacts with FKBP4. Interacts with PPP5C (via TPR repeats); the interaction is calcium-dependent and modulates PPP5C activity. Interacts with TPPP; this interaction inhibits TPPP dimerization.

Its subcellular location is the nucleus envelope. The protein resides in the cytoplasm. The protein localises to the cell membrane. In terms of biological role, may function as calcium sensor and modulator, contributing to cellular calcium signaling. May function by interacting with other proteins, such as TPR-containing proteins, and indirectly play a role in many physiological processes such as the reorganization of the actin cytoskeleton and in cell motility. Binds 2 calcium ions. Calcium binding is cooperative. This chain is Protein S100-A6 (S100A6), found in Equus caballus (Horse).